Consider the following 563-residue polypeptide: Alpha-keto-acid decarboxylase (563 aa).

Glu59 provides a ligand contact to thiamine diphosphate. Positions 347 to 367 are disordered; it reads SSPPVASPPAEPLPPPPPREQ. A compositionally biased stretch (pro residues) spans 351–366; that stretch reads VASPPAEPLPPPPPRE. A thiamine pyrophosphate binding region spans residues 394 to 476; it reads TSFYGMADHR…VVVNNDGYTV (83 aa). Positions 444, 471, and 473 each coordinate Mg(2+).

This sequence belongs to the TPP enzyme family. The cofactor is a metal cation. It depends on thiamine diphosphate as a cofactor.

Its function is as follows. Decarboxylates branched-chain and aromatic alpha-keto acids to aldehydes. The sequence is that of Alpha-keto-acid decarboxylase (kdc) from Mycolicibacterium paratuberculosis (strain ATCC BAA-968 / K-10) (Mycobacterium paratuberculosis).